The sequence spans 460 residues: tRNA (guanine(37)-N(1))-methyltransferase (460 aa).

S-adenosyl-L-methionine is bound by residues His-204, 243 to 244 (DL), 271 to 272 (DA), and Asn-292. Positions 390 to 428 (ASTTTTPTTSNTNTSTTTSTTSTSTTTTESTNTNNSANN) are enriched in low complexity. The tract at residues 390-460 (ASTTTTPTTS…SIDTNKKLKN (71 aa)) is disordered. Residues 442-451 (DSNETNETDS) are compositionally biased toward acidic residues.

The protein belongs to the class I-like SAM-binding methyltransferase superfamily. TRM5/TYW2 family. Monomer.

The protein localises to the mitochondrion matrix. It is found in the nucleus. The protein resides in the cytoplasm. It catalyses the reaction guanosine(37) in tRNA + S-adenosyl-L-methionine = N(1)-methylguanosine(37) in tRNA + S-adenosyl-L-homocysteine + H(+). In terms of biological role, specifically methylates the N1 position of guanosine-37 in various cytoplasmic and mitochondrial tRNAs. Methylation is not dependent on the nature of the nucleoside 5' of the target nucleoside. This is the first step in the biosynthesis of wybutosine (yW), a modified base adjacent to the anticodon of tRNAs and required for accurate decoding. This chain is tRNA (guanine(37)-N(1))-methyltransferase (trmt5), found in Dictyostelium discoideum (Social amoeba).